Reading from the N-terminus, the 166-residue chain is Regulatory protein RecX (166 aa).

This sequence belongs to the RecX family.

Its subcellular location is the cytoplasm. Its function is as follows. Modulates RecA activity. This Escherichia coli O139:H28 (strain E24377A / ETEC) protein is Regulatory protein RecX.